Consider the following 261-residue polypeptide: Segregation and condensation protein A (261 aa).

Belongs to the ScpA family. As to quaternary structure, component of a cohesin-like complex composed of ScpA, ScpB and the Smc homodimer, in which ScpA and ScpB bind to the head domain of Smc. The presence of the three proteins is required for the association of the complex with DNA.

The protein resides in the cytoplasm. In terms of biological role, participates in chromosomal partition during cell division. May act via the formation of a condensin-like complex containing Smc and ScpB that pull DNA away from mid-cell into both cell halves. The protein is Segregation and condensation protein A of Ligilactobacillus salivarius (strain UCC118) (Lactobacillus salivarius).